Consider the following 594-residue polypeptide: Bifunctional lycopene cyclase/phytoene synthase (594 aa).

The lycopene beta-cyclase stretch occupies residues Met1–Asn249. 7 helical membrane-spanning segments follow: residues Leu3 to Leu23, Lys35 to Ile55, Leu77 to Phe97, Leu130 to Gly150, Met153 to Met173, Phe176 to Leu196, and Ile227 to Met247. The phytoene synthase stretch occupies residues Tyr256 to Leu594.

The protein in the N-terminal section; belongs to the lycopene beta-cyclase family. This sequence in the C-terminal section; belongs to the phytoene/squalene synthase family.

Its subcellular location is the membrane. It catalyses the reaction all-trans-lycopene = gamma-carotene. The enzyme catalyses gamma-carotene = all-trans-beta-carotene. The catalysed reaction is 2 (2E,6E,10E)-geranylgeranyl diphosphate = 15-cis-phytoene + 2 diphosphate. The protein operates within carotenoid biosynthesis; beta-carotene biosynthesis. Its pathway is carotenoid biosynthesis; phytoene biosynthesis; all-trans-phytoene from geranylgeranyl diphosphate: step 1/1. Bifunctional enzyme that catalyzes the reactions from geranylgeranyl diphosphate to phytoene (phytoene synthase) and lycopene to beta-carotene via the intermediate gamma-carotene (lycopene cyclase). The sequence is that of Bifunctional lycopene cyclase/phytoene synthase from Arthroderma gypseum (strain ATCC MYA-4604 / CBS 118893) (Microsporum gypseum).